The chain runs to 511 residues: MLRILLSAQTSPARLSGLLLIPPVQPCCLGPSKSGDRPFGGGPVQGLQRLLEQARSPGELLRWLSQNPTKVRAHHYPVALRRLGQLLVSQPRPSPVEQATLQDLSQLIIRNCPSFDVHTIHVCLHLAVLLGFPSDGPLLCALEQERRSRLPPKPPSPHRPAIYGGQRLEVALSCPRFLQYPRQHLIRSLAEARPEELTPHVMVLLAQHLARHRLREPQLLEAIAHFLVVQEAQLNSKVVQKLVLPFGRLNYMPLEQQFMPCLERILAREAGVAPLATVNILMSLCQLQCLPFRALQFVFSPSFINHINGTPPSLIVRRYLSLLDTAVELELPGYQGPRLPQRQRVPIFPQPLITDRARCKYSHKDMVAEGLRQLLGEENYRQNLTVPPGYCTDFLLCVSSSGAVLPMRTQDPFLPYPPRSCQQDQANFNSTTQDPAQRVVLMLRERWHFCRDGRVLLGSRALRERHLGLMGYQLLPLPFEELESQRGLPQLKSYLRQKLQALGFRWGPEGG.

The 59-residue stretch at 439–497 (VVLMLRERWHFCRDGRVLLGSRALRERHLGLMGYQLLPLPFEELESQRGLPQLKSYLRQ) folds into the RAP domain.

It belongs to the FAST protein kinase family. In terms of assembly, interacts with TIA1; the interactions leads to TIA1 phosphorylation. Interacts with TIAR. In terms of processing, autophosphorylated on serine/threonine residues. Activated by dephosphorylation.

The protein localises to the mitochondrion matrix. It catalyses the reaction L-seryl-[Fas-activated protein] + ATP = O-phospho-L-seryl-[Fas-activated protein] + ADP + H(+). The enzyme catalyses L-threonyl-[Fas-activated protein] + ATP = O-phospho-L-threonyl-[Fas-activated protein] + ADP + H(+). The catalysed reaction is L-seryl-[protein] + ATP = O-phospho-L-seryl-[protein] + ADP + H(+). It carries out the reaction L-threonyl-[protein] + ATP = O-phospho-L-threonyl-[protein] + ADP + H(+). Functionally, phosphorylates the splicing regulator TIA1, thereby promoting the inclusion of FAS exon 6, which leads to an mRNA encoding a pro-apoptotic form of the receptor. Required for the biogenesis of some mitochondrial-encoded mRNAs, specifically stabilizes ND6 (NADH dehydrogenase complex subunit 6) mRNA, and regulates its levels. The sequence is that of Fas-activated serine/threonine kinase (Fastk) from Mus musculus (Mouse).